The chain runs to 330 residues: Putative [LysW]-L-2-aminoadipate/[LysW]-L-glutamate phosphate reductase (330 aa).

NADP(+) contacts are provided by residues S10–I13 and S34–K36. Residue C142 is part of the active site. N297 provides a ligand contact to NADP(+).

It belongs to the NAGSA dehydrogenase family. Type 1 subfamily. LysY sub-subfamily.

The protein resides in the cytoplasm. The catalysed reaction is [amino-group carrier protein]-C-terminal-N-(1-carboxy-5-oxopentan-1-yl)-L-glutamine + phosphate + NADP(+) = [amino-group carrier protein]-C-terminal-N-(1-carboxy-5-phosphooxy-5-oxopentan-1-yl)-L-glutamine + NADPH + H(+). It catalyses the reaction [amino-group carrier protein]-C-terminal-gamma-(L-glutamyl-5-semialdehyde)-L-glutamate + phosphate + NADP(+) = [amino-group carrier protein]-C-terminal-gamma-(5-phospho-L-glutamyl)-L-glutamate + NADPH + H(+). It participates in amino-acid biosynthesis; L-lysine biosynthesis via AAA pathway; L-lysine from L-alpha-aminoadipate (Thermus route): step 3/5. Its pathway is amino-acid biosynthesis; L-arginine biosynthesis. Involved in both the arginine and lysine biosynthetic pathways. The sequence is that of Putative [LysW]-L-2-aminoadipate/[LysW]-L-glutamate phosphate reductase from Pyrococcus abyssi (strain GE5 / Orsay).